Reading from the N-terminus, the 636-residue chain is Transcription termination factor FttA (636 aa).

The segment at 4–72 is KHa; sequence ELELKRIRDE…VVFRWNVDKR (69 aa). The interval 73–140 is KHb; it reads KDPAETKDYI…WQPKTIRTPP (68 aa). Positions 181-383 are metallo-beta-lactamase N-terminus; the sequence is NIRMNALGGF…LLIEATYGGP (203 aa). Zn(2+)-binding residues include His242, His244, Asp246, His247, His329, and Asp352. The beta-Casp stretch occupies residues 384 to 577; the sequence is QDRIPSRQES…LKVFTLEGFS (194 aa). The interval 578–636 is metallo-beta-lactamase C-terminus; it reads GHSSRSQISQFLRRIQPRPKVVIVNHGEESKCVSLSTMIHKKLRKSTKSPKNLEVVLLK. Residue His603 coordinates Zn(2+).

The protein belongs to the metallo-beta-lactamase superfamily. RNA-metabolizing metallo-beta-lactamase-like family. FttA subfamily. As to quaternary structure, homodimer. Interacts with RNA polymerase (RNAP), interacts with the Spt4-Spt5 complex. Zn(2+) serves as cofactor.

Its function is as follows. Terminates transcription on the whole genome. Termination is linked to FttA-mediated RNA cleavage and does not require NTP hydrolysis. Cleaves endonucleolytically at the RNA exit channel of RNA polymerase (RNAP); the 5'-3' exonuclease activity of this protein degrades the nascent RNA released from RNAP. Terminates transcription genome-wide in M.maripaludis. Restores wild-type growth to a strain of Methanococcus maripaludis depleted for this gene at 22 degrees Celsius and prevents transcriptional read-through. Transcription termination is most effective in vivo on RNAs with more than one U4-tract in their 3'-ends. Has endonuclease activity after U-rich tracts in transcription termination sequences. This chain is Transcription termination factor FttA, found in Lokiarchaeum sp. (strain GC14_75).